The chain runs to 243 residues: Ubiquinone/menaquinone biosynthesis C-methyltransferase UbiE (243 aa).

Residues Thr69, Asp90, and 116 to 117 each bind S-adenosyl-L-methionine; that span reads DA.

Belongs to the class I-like SAM-binding methyltransferase superfamily. MenG/UbiE family.

It carries out the reaction a 2-demethylmenaquinol + S-adenosyl-L-methionine = a menaquinol + S-adenosyl-L-homocysteine + H(+). The catalysed reaction is a 2-methoxy-6-(all-trans-polyprenyl)benzene-1,4-diol + S-adenosyl-L-methionine = a 5-methoxy-2-methyl-3-(all-trans-polyprenyl)benzene-1,4-diol + S-adenosyl-L-homocysteine + H(+). It participates in quinol/quinone metabolism; menaquinone biosynthesis; menaquinol from 1,4-dihydroxy-2-naphthoate: step 2/2. Its pathway is cofactor biosynthesis; ubiquinone biosynthesis. Methyltransferase required for the conversion of demethylmenaquinol (DMKH2) to menaquinol (MKH2) and the conversion of 2-polyprenyl-6-methoxy-1,4-benzoquinol (DDMQH2) to 2-polyprenyl-3-methyl-6-methoxy-1,4-benzoquinol (DMQH2). This chain is Ubiquinone/menaquinone biosynthesis C-methyltransferase UbiE, found in Burkholderia ambifaria (strain MC40-6).